Consider the following 71-residue polypeptide: DNA-directed RNA polymerases II, IV and V subunit 10 (71 aa).

Zn(2+) contacts are provided by Cys7, Cys10, Cys44, and Cys45.

This sequence belongs to the archaeal Rpo10/eukaryotic RPB10 RNA polymerase subunit family. Component of the RNA polymerase II, IV and V complexes. Interacts with NRPD1.

It is found in the nucleus. DNA-dependent RNA polymerase catalyzes the transcription of DNA into RNA using the four ribonucleoside triphosphates as substrates. Component of RNA polymerase II which synthesizes mRNA precursors and many functional non-coding RNAs. Pol II is the central component of the basal RNA polymerase II transcription machinery. It is composed of mobile elements that move relative to each other. Component of RNA polymerases IV and V which mediate short-interfering RNAs (siRNA) accumulation and subsequent RNA-directed DNA methylation-dependent (RdDM) transcriptional gene silencing (TGS) of endogenous repeated sequences, including transposable elements. This chain is DNA-directed RNA polymerases II, IV and V subunit 10 (NRPB10), found in Arabidopsis thaliana (Mouse-ear cress).